A 276-amino-acid polypeptide reads, in one-letter code: Short-chain dehydrogenase/reductase ATR10 (276 aa).

4 residues coordinate NADP(+): I29, S51, D78, and N105. Catalysis depends on S161, which acts as the Proton donor. NADP(+) is bound by residues K185 and T214. K185 serves as the catalytic Lowers pKa of active site Tyr.

It belongs to the short-chain dehydrogenases/reductases (SDR) family.

The protein operates within mycotoxin biosynthesis. In terms of biological role, short-chain dehydrogenase/reductase; part of the core atranone cluster (CAC) which products are predicted to catalyze most or all steps of mycotoxin atranone synthesis, starting from geranylgeranyl pyrophosphate (GGPP). The initial cyclization of GGPP to dolabellane is probably performed by the terpene cyclase ATR13. The Baeyer-Villiger oxidation near the end of the atranone synthesis, which converts atranones D and E to atranones F and G is predicted to be catalyzed by the monooxygenase ATR8. Of the CAC's other predicted gene products, the reducing PKS ATR6 might synthesize a polyketide chain. This polyketide is probably transferred onto the atranone backbone by the polyketide transferase ATR5. Other predicted CAC products include 4 oxygenases (ATR2, ATR3, ATR4, and ATR14), 3 short-chain reductases (ATR7, ATR9, and ATR10), and a methyltransferase (ATR12). These may all be involved in the various steps of atranone biosynthesis, although their specific roles must await experimental determination. The polypeptide is Short-chain dehydrogenase/reductase ATR10 (Stachybotrys chlorohalonatus (strain IBT 40285)).